A 186-amino-acid chain; its full sequence is Imidazoleglycerol-phosphate dehydratase (186 aa).

Belongs to the imidazoleglycerol-phosphate dehydratase family.

The protein resides in the cytoplasm. It catalyses the reaction D-erythro-1-(imidazol-4-yl)glycerol 3-phosphate = 3-(imidazol-4-yl)-2-oxopropyl phosphate + H2O. The protein operates within amino-acid biosynthesis; L-histidine biosynthesis; L-histidine from 5-phospho-alpha-D-ribose 1-diphosphate: step 6/9. This chain is Imidazoleglycerol-phosphate dehydratase, found in Pyrobaculum aerophilum (strain ATCC 51768 / DSM 7523 / JCM 9630 / CIP 104966 / NBRC 100827 / IM2).